We begin with the raw amino-acid sequence, 152 residues long: Small ribosomal subunit protein uS9 (152 aa).

Belongs to the universal ribosomal protein uS9 family.

The chain is Small ribosomal subunit protein uS9 from Mycobacterium ulcerans (strain Agy99).